The following is a 109-amino-acid chain: Oncomodulin (109 aa).

Serine 2 is subject to N-acetylserine. 2 consecutive EF-hand domains span residues 39 to 74 and 78 to 109; these read MSAS…FQSD and LTES…MVHS. Ca(2+) is bound by residues aspartate 52, aspartate 54, serine 56, tyrosine 58, glutamate 63, aspartate 91, aspartate 93, aspartate 95, lysine 97, and glutamate 102.

Belongs to the parvalbumin family. Found in tumor tissues and not detected in normal tissues.

In terms of biological role, has some calmodulin-like activity with respect to enzyme activation and growth regulation. Binds two calcium ions. This chain is Oncomodulin (Ocm), found in Rattus norvegicus (Rat).